Reading from the N-terminus, the 900-residue chain is Bifunctional uridylyltransferase/uridylyl-removing enzyme (900 aa).

The segment at 1-342 is uridylyltransferase; the sequence is MPQVDPELFD…PCEQPVQIQP (342 aa). The interval 343 to 705 is uridylyl-removing; the sequence is LNSRFQLRDG…TTQREFESGS (363 aa). Residues 461–583 form the HD domain; it reads VDAHTLNLIK…VGDQTHLDYL (123 aa). 2 ACT domains span residues 706–789 and 816–891; these read QIFI…IIQR and VLEV…DNGR.

It belongs to the GlnD family. The cofactor is Mg(2+).

It catalyses the reaction [protein-PII]-L-tyrosine + UTP = [protein-PII]-uridylyl-L-tyrosine + diphosphate. It carries out the reaction [protein-PII]-uridylyl-L-tyrosine + H2O = [protein-PII]-L-tyrosine + UMP + H(+). With respect to regulation, uridylyltransferase (UTase) activity is inhibited by glutamine, while glutamine activates uridylyl-removing (UR) activity. Its function is as follows. Modifies, by uridylylation and deuridylylation, the PII regulatory proteins (GlnB and homologs), in response to the nitrogen status of the cell that GlnD senses through the glutamine level. Under low glutamine levels, catalyzes the conversion of the PII proteins and UTP to PII-UMP and PPi, while under higher glutamine levels, GlnD hydrolyzes PII-UMP to PII and UMP (deuridylylation). Thus, controls uridylylation state and activity of the PII proteins, and plays an important role in the regulation of nitrogen assimilation and metabolism. This chain is Bifunctional uridylyltransferase/uridylyl-removing enzyme, found in Pseudomonas aeruginosa (strain UCBPP-PA14).